The following is a 343-amino-acid chain: Phenylalanine--tRNA ligase alpha subunit (343 aa).

Glu-258 provides a ligand contact to Mg(2+).

It belongs to the class-II aminoacyl-tRNA synthetase family. Phe-tRNA synthetase alpha subunit type 1 subfamily. Tetramer of two alpha and two beta subunits. Requires Mg(2+) as cofactor.

It is found in the cytoplasm. The enzyme catalyses tRNA(Phe) + L-phenylalanine + ATP = L-phenylalanyl-tRNA(Phe) + AMP + diphosphate + H(+). The chain is Phenylalanine--tRNA ligase alpha subunit from Symbiobacterium thermophilum (strain DSM 24528 / JCM 14929 / IAM 14863 / T).